Consider the following 502-residue polypeptide: Beta-amyrin 28-monooxygenase CYP716A379 (502 aa).

Residues 3 to 23 traverse the membrane as a helical; Signal-anchor for type II membrane protein segment; that stretch reads LITLLSALLVLAIVSLSTFFV. Asparagine 88 and asparagine 181 each carry an N-linked (GlcNAc...) asparagine glycan. Cysteine 444 contributes to the heme binding site.

The protein belongs to the cytochrome P450 family. The cofactor is heme. In terms of tissue distribution, mainly expressed in flowers and flower buds, to a lesser extent in young leaves and, at low levels, in old leaves, stems and roots.

Its subcellular location is the membrane. The catalysed reaction is beta-amyrin + 3 reduced [NADPH--hemoprotein reductase] + 3 O2 = oleanolate + 3 oxidized [NADPH--hemoprotein reductase] + 4 H2O + 4 H(+). The protein operates within secondary metabolite biosynthesis; terpenoid biosynthesis. Its function is as follows. Component of the oleanane-type triterpene saponins (e.g. saponarioside A and saponarioside B) biosynthetic pathway, leading to the production of natural products with detergent properties used as traditional sources of soap. An oxidoreductase that facilitates the oxidation of the methyl group to a carboxyl group at the C-28 position of beta-amyrin, resulting in the formation of oleanolic acid. Catalyzes also the subsequent oxidation of the methyl group to a&lt; carboxyl group at the C-16 alpha position of oleanolic acid, resulting in the formation of echinocystic acid. In Saponaria officinalis (Common soapwort), this protein is Beta-amyrin 28-monooxygenase CYP716A379.